The following is a 111-amino-acid chain: UPF0342 protein SAG1376 (111 aa).

The span at 52–63 (QEMMQSGQMPSQ) shows a compositional bias: polar residues. The tract at residues 52–71 (QEMMQSGQMPSQEEQDEMSK) is disordered.

This sequence belongs to the UPF0342 family.

This chain is UPF0342 protein SAG1376, found in Streptococcus agalactiae serotype V (strain ATCC BAA-611 / 2603 V/R).